Consider the following 426-residue polypeptide: Antigen EM13 (426 aa).

Residues 1 to 240 form the F-BAR domain; it reads MIQERADIEK…TVAKVDADAD (240 aa). Disordered regions lie at residues 287 to 315 and 350 to 369; these read LTSLKTITSPDRGGPIPGTTDSGSNISTS and ISKEKQRVEDTPPYPDFVDD. The segment covering 305–315 has biased composition (polar residues); the sequence is TTDSGSNISTS. In terms of domain architecture, SH3 spans 371-426; it reads RPGVPIRALYDYVGVEADELSFNSGDLFEKLEDEDEQGWCKGRKDGRVGLYPRQLR.

The sequence is that of Antigen EM13 (EM13) from Echinococcus multilocularis (Fox tapeworm).